Here is a 564-residue protein sequence, read N- to C-terminus: MFS-type transporter dmxR4 (564 aa).

The interval 1 to 61 (MSSERPDGSA…PAKEAPAKPA (61 aa)) is disordered. Residues 25–44 (TDSSRTSNDASQTSQDTAVQ) show a composition bias toward polar residues. Basic and acidic residues predominate over residues 47–57 (PPKEAPAKEAP). The next 5 membrane-spanning stretches (helical) occupy residues 71 to 91 (IALL…DRSI), 106 to 126 (AGDI…FQLL), 138 to 158 (TVFV…GAAP), 169 to 189 (LAGI…VFLI), and 199 to 219 (GLFG…GGGF). N-linked (GlcNAc...) asparagine glycosylation occurs at N222. The next 7 helical transmembrane spans lie at 227–247 (WCFY…ALWM), 265–285 (GLDL…LLAL), 299–319 (IIAL…LQAF), 348–368 (GVHL…GGFF), 376–396 (SPLA…IYTF), 405–425 (WIGS…APNL), and 438–458 (SALA…VSVG). N-linked (GlcNAc...) asparagine glycosylation occurs at N469. 2 consecutive transmembrane segments (helical) span residues 470–490 (LSWI…VSFL) and 512–532 (VFMI…SMEW). The interval 534–564 (SVKSRGSWDEKPAAKPTDKPTEEKKVPPEAV) is disordered. Positions 539-564 (GSWDEKPAAKPTDKPTEEKKVPPEAV) are enriched in basic and acidic residues.

This sequence belongs to the major facilitator superfamily. TCR/Tet family.

The protein resides in the membrane. Functionally, MFS-type transporter; part of the gene cluster that mediates the biosynthesis of the dimeric xanthones cryptosporioptides. The sequence is that of MFS-type transporter dmxR4 from Cryptosporiopsis sp. (strain 8999).